The chain runs to 90 residues: Evasin P1128 (90 aa).

A signal peptide spans 1–18; sequence MFIALGIQLFVAVTYAAG. 3 cysteine pairs are disulfide-bonded: cysteine 29/cysteine 51, cysteine 33/cysteine 53, and cysteine 44/cysteine 64. An N-linked (GlcNAc...) asparagine glycan is attached at asparagine 32.

It is found in the secreted. In terms of biological role, salivary chemokine-binding protein which binds to host chemokines CXCL1, CXCL2, CXCL3, CXCL5 and CXCL8. In Ixodes ricinus (Common tick), this protein is Evasin P1128.